Consider the following 308-residue polypeptide: Putative protein TIC 214 N-terminal part (308 aa).

Transmembrane regions (helical) follow at residues 18-38 (IINSVVVVGFYYGFLTTFSIG), 64-84 (FITGQLMMFISIYYAPLHLAL), 87-107 (PHTITVLVLPHLLFHFFWNNH), 124-144 (LSIQCVFLNNLIFQLFNHFIL), 172-192 (VGWLIGHILFMKWVGLVLSWI), and 215-235 (IFSILLFITSVYYLGRMPSPI). Positions 239-249 (KLKETSEMEER) are enriched in basic and acidic residues. The interval 239–308 (KLKETSEMEE…RDPSEWKGNI (70 aa)) is disordered. Residues 250-262 (GESEEETDVEIET) are compositionally biased toward acidic residues. Over residues 264–273 (SETKETKQEQ) the composition is skewed to basic and acidic residues. Acidic residues predominate over residues 275–293 (GSTEEDPSLCSEEQEDPDK). A compositionally biased stretch (basic and acidic residues) spans 294-308 (LDETGRDPSEWKGNI).

The protein belongs to the TIC214 family. As to quaternary structure, part of the Tic complex.

The protein resides in the plastid. The protein localises to the chloroplast inner membrane. Involved in protein precursor import into chloroplasts. May be part of an intermediate translocation complex acting as a protein-conducting channel at the inner envelope. The polypeptide is Putative protein TIC 214 N-terminal part (Piper cenocladum (Ant piper)).